The primary structure comprises 582 residues: Threonine--tRNA ligase (582 aa).

The segment at 185–478 (DHRKLGKELD…LVEHYGGAFP (294 aa)) is catalytic. The Zn(2+) site is built by cysteine 278, histidine 329, and histidine 455.

Belongs to the class-II aminoacyl-tRNA synthetase family. In terms of assembly, homodimer. It depends on Zn(2+) as a cofactor.

It localises to the cytoplasm. It carries out the reaction tRNA(Thr) + L-threonine + ATP = L-threonyl-tRNA(Thr) + AMP + diphosphate + H(+). In terms of biological role, catalyzes the attachment of threonine to tRNA(Thr) in a two-step reaction: L-threonine is first activated by ATP to form Thr-AMP and then transferred to the acceptor end of tRNA(Thr). Also edits incorrectly charged L-seryl-tRNA(Thr). The sequence is that of Threonine--tRNA ligase from Borrelia garinii subsp. bavariensis (strain ATCC BAA-2496 / DSM 23469 / PBi) (Borreliella bavariensis).